A 398-amino-acid polypeptide reads, in one-letter code: Lysophosphatidylserine lipase ABHD12 (398 aa).

A compositionally biased stretch (basic and acidic residues) spans 1–15; sequence MRKRTEPVTLEHERC. Residues 1–24 form a disordered region; it reads MRKRTEPVTLEHERCAASGSSSSG. The Cytoplasmic segment spans residues 1–74; it reads MRKRTEPVTL…RKSLWFRLRK (74 aa). A helical transmembrane segment spans residues 75–95; sequence ILLCVLGFYIAIPFLVKLCPG. At 96-398 the chain is on the extracellular side; it reads IQAKLIFLNF…LGKSEPERQH (303 aa). An N-linked (GlcNAc...) asparagine glycan is attached at Asn123. The Nucleophile role is filled by Ser246. Active-site charge relay system residues include Asp333 and His372.

This sequence belongs to the serine esterase family.

It is found in the endoplasmic reticulum membrane. The catalysed reaction is 1-(9Z-octadecenoyl)-sn-glycero-3-phospho-L-serine + H2O = sn-glycero-3-phospho-L-serine + (9Z)-octadecenoate + H(+). It carries out the reaction 1-(9Z-octadecenoyl)-sn-glycero-3-phospho-(1'-sn-glycerol) + H2O = sn-glycero-3-phospho-(1'-sn-glycerol) + (9Z)-octadecenoate + H(+). It catalyses the reaction 1-(9Z-octadecenoyl)-sn-glycero-3-phospho-(1D-myo-inositol) + H2O = sn-glycero-3-phospho-1D-myo-inositol + (9Z)-octadecenoate + H(+). The enzyme catalyses 1-(9Z-octadecenoyl)-sn-glycero-3-phosphoethanolamine + H2O = sn-glycero-3-phosphoethanolamine + (9Z)-octadecenoate + H(+). The catalysed reaction is 1-(9Z-octadecenoyl)-sn-glycero-3-phosphocholine + H2O = 1-(9Z-octadecenoyl)-sn-glycerol + phosphocholine + H(+). It carries out the reaction 2-(9Z-octadecenoyl)-glycerol + H2O = glycerol + (9Z)-octadecenoate + H(+). It catalyses the reaction 1-hexadecanoyl-sn-glycero-3-phospho-L-serine + H2O = sn-glycero-3-phospho-L-serine + hexadecanoate + H(+). The enzyme catalyses 2-(5Z,8Z,11Z,14Z-eicosatetraenoyl)-glycerol + H2O = glycerol + (5Z,8Z,11Z,14Z)-eicosatetraenoate + H(+). The catalysed reaction is Hydrolyzes glycerol monoesters of long-chain fatty acids.. It carries out the reaction 1-decanoylglycerol + H2O = decanoate + glycerol + H(+). It catalyses the reaction 1-dodecanoylglycerol + H2O = dodecanoate + glycerol + H(+). The enzyme catalyses 1-tetradecanoylglycerol + H2O = tetradecanoate + glycerol + H(+). The catalysed reaction is 2-hexadecanoylglycerol + H2O = glycerol + hexadecanoate + H(+). It carries out the reaction 1-(9Z-octadecenoyl)-glycerol + H2O = glycerol + (9Z)-octadecenoate + H(+). It catalyses the reaction 2-(9Z,12Z-octadecadienoyl)-glycerol + H2O = (9Z,12Z)-octadecadienoate + glycerol + H(+). The enzyme catalyses 1-(5Z,8Z,11Z,14Z-eicosatetraenoyl)-glycerol + H2O = glycerol + (5Z,8Z,11Z,14Z)-eicosatetraenoate + H(+). The catalysed reaction is 1-(9Z,12Z-octadecadienoyl)-glycerol + H2O = (9Z,12Z)-octadecadienoate + glycerol + H(+). It carries out the reaction 1-hexadecanoylglycerol + H2O = glycerol + hexadecanoate + H(+). It catalyses the reaction 1-octadecanoylglycerol + H2O = octadecanoate + glycerol + H(+). The enzyme catalyses 1-octadecanoyl-2-(9,10-epoxyoctadecanoyl)-sn-glycero-3-phospho-L-serine + H2O = 9,10-epoxyoctadecanoate + 1-octadecanoyl-sn-glycero-3-phosphoserine + H(+). The catalysed reaction is 1-octadecanoyl-2-(10-hydroxyoctadecanoyl)-sn-glycero-3-phospho-L-serine + H2O = 1-octadecanoyl-sn-glycero-3-phosphoserine + 10-hydroxyoctadecanoate + H(+). It carries out the reaction 1-hexadecanoyl-2-(10-hydroxyoctadecanoyl)-sn-glycero-3-phospho-L-serine + H2O = 10-hydroxyoctadecanoate + 1-hexadecanoyl-sn-glycero-3-phospho-L-serine + H(+). In terms of biological role, lysophosphatidylserine (LPS) lipase that mediates the hydrolysis of lysophosphatidylserine, a class of signaling lipids that regulates immunological and neurological processes. Represents a major lysophosphatidylserine lipase in the brain, thereby playing a key role in the central nervous system. Also able to hydrolyze oxidized phosphatidylserine; oxidized phosphatidylserine is produced in response to severe inflammatory stress and constitutes a proapoptotic 'eat me' signal. Also has monoacylglycerol (MAG) lipase activity: hydrolyzes 2-arachidonoylglycerol (2-AG), thereby acting as a regulator of endocannabinoid signaling pathways. Has a strong preference for very-long-chain lipid substrates; substrate specificity is likely due to improved catalysis and not improved substrate binding. This is Lysophosphatidylserine lipase ABHD12 from Rattus norvegicus (Rat).